Consider the following 552-residue polypeptide: 5'-AMP-activated protein kinase catalytic subunit alpha-2 (552 aa).

Residues 16–268 (YVLGDTLGVG…IKDIREHEWF (253 aa)) form the Protein kinase domain. ATP contacts are provided by residues 22–30 (LGVGTFGKV) and K45. The active-site Proton acceptor is the D139. Phosphothreonine; by LKB1 and CaMKK2 is present on T172. A Phosphothreonine modification is found at T258. Positions 291–376 (EAVKEVCEKF…PERMPPLIAD (86 aa)) are AIS. Residue S377 is modified to Phosphoserine. Residues 477 to 521 (VEQRSGSSTPQRSCSAAGLHRPRSSFDSTTAESHSLSGSLTGSLT) form a disordered region. Residues 480-490 (RSGSSTPQRSC) show a composition bias toward polar residues. S491 carries the post-translational modification Phosphoserine. A compositionally biased stretch (polar residues) spans 501 to 510 (SFDSTTAESH). Residues 511–521 (SLSGSLTGSLT) are compositionally biased toward low complexity.

The protein belongs to the protein kinase superfamily. CAMK Ser/Thr protein kinase family. SNF1 subfamily. As to quaternary structure, AMPK is a heterotrimer of an alpha catalytic subunit (PRKAA1 or PRKAA2), a beta (PRKAB1 or PRKAB2) and a gamma non-catalytic subunits (PRKAG1, PRKAG2 or PRKAG3). Interacts with FNIP1 and FNIP2. Associates with internalized insulin receptor/INSR complexes on Golgi/endosomal membranes; PRKAA2/AMPK2 together with ATIC and HACD3/PTPLAD1 is proposed to be part of a signaling network regulating INSR autophosphorylation and endocytosis. Interacts with ARF6. The phosphorylated form at Thr-172 mediated by CamKK2 interacts with ACSS2. It depends on Mg(2+) as a cofactor. Ubiquitinated. Post-translationally, phosphorylated at Thr-172 by STK11/LKB1 in complex with STE20-related adapter-alpha (STRADA) pseudo kinase and CAB39. Also phosphorylated at Thr-172 by CAMKK2; triggered by a rise in intracellular calcium ions, without detectable changes in the AMP/ATP ratio. CAMKK1 can also phosphorylate Thr-172, but at much lower level. Dephosphorylated by protein phosphatase 2A and 2C (PP2A and PP2C). Phosphorylated by ULK1; leading to negatively regulate AMPK activity and suggesting the existence of a regulatory feedback loop between ULK1 and AMPK. Dephosphorylated by PPM1A and PPM1B at Thr-172 (mediated by STK11/LKB1).

The protein localises to the cytoplasm. It is found in the nucleus. It catalyses the reaction L-seryl-[protein] + ATP = O-phospho-L-seryl-[protein] + ADP + H(+). It carries out the reaction L-threonyl-[protein] + ATP = O-phospho-L-threonyl-[protein] + ADP + H(+). The catalysed reaction is L-seryl-[acetyl-CoA carboxylase] + ATP = O-phospho-L-seryl-[acetyl-CoA carboxylase] + ADP + H(+). The enzyme catalyses L-seryl-[3-hydroxy-3-methylglutaryl-coenzyme A reductase] + ATP = O-phospho-L-seryl-[3-hydroxy-3-methylglutaryl-coenzyme A reductase] + ADP + H(+). Its activity is regulated as follows. Activated by phosphorylation on Thr-172. Binding of AMP to non-catalytic gamma subunit (PRKAG1, PRKAG2 or PRKAG3) results in allosteric activation, inducing phosphorylation on Thr-172. AMP-binding to gamma subunit also sustains activity by preventing dephosphorylation of Thr-172. ADP also stimulates Thr-172 phosphorylation, without stimulating already phosphorylated AMPK. ATP promotes dephosphorylation of Thr-172, rendering the enzyme inactive. Under physiological conditions AMPK mainly exists in its inactive form in complex with ATP, which is much more abundant than AMP. AMPK is activated by antihyperglycemic drug metformin, a drug prescribed to patients with type 2 diabetes: in vivo, metformin seems to mainly inhibit liver gluconeogenesis. However, metformin can be used to activate AMPK in muscle and other cells in culture or ex vivo. Selectively inhibited by compound C (6-[4-(2-Piperidin-1-yl-ethoxy)-phenyl)]-3-pyridin-4-yl-pyyrazolo[1,5-a] pyrimidine. Activated by resveratrol, a natural polyphenol present in red wine, and S17834, a synthetic polyphenol. Salicylate/aspirin directly activates kinase activity, primarily by inhibiting Thr-172 dephosphorylation. Its function is as follows. Catalytic subunit of AMP-activated protein kinase (AMPK), an energy sensor protein kinase that plays a key role in regulating cellular energy metabolism. In response to reduction of intracellular ATP levels, AMPK activates energy-producing pathways and inhibits energy-consuming processes: inhibits protein, carbohydrate and lipid biosynthesis, as well as cell growth and proliferation. AMPK acts via direct phosphorylation of metabolic enzymes, and by longer-term effects via phosphorylation of transcription regulators. Regulates lipid synthesis by phosphorylating and inactivating lipid metabolic enzymes such as ACACA, ACACB, GYS1, HMGCR and LIPE; regulates fatty acid and cholesterol synthesis by phosphorylating acetyl-CoA carboxylase (ACACA and ACACB) and hormone-sensitive lipase (LIPE) enzymes, respectively. Promotes lipolysis of lipid droplets by mediating phosphorylation of isoform 1 of CHKA (CHKalpha2). Regulates insulin-signaling and glycolysis by phosphorylating IRS1, PFKFB2 and PFKFB3. Involved in insulin receptor/INSR internalization. AMPK stimulates glucose uptake in muscle by increasing the translocation of the glucose transporter SLC2A4/GLUT4 to the plasma membrane, possibly by mediating phosphorylation of TBC1D4/AS160. Regulates transcription and chromatin structure by phosphorylating transcription regulators involved in energy metabolism such as CRTC2/TORC2, FOXO3, histone H2B, HDAC5, MEF2C, MLXIPL/ChREBP, EP300, HNF4A, p53/TP53, SREBF1, SREBF2 and PPARGC1A. Acts as a key regulator of glucose homeostasis in liver by phosphorylating CRTC2/TORC2, leading to CRTC2/TORC2 sequestration in the cytoplasm. In response to stress, phosphorylates 'Ser-36' of histone H2B (H2BS36ph), leading to promote transcription. Acts as a key regulator of cell growth and proliferation by phosphorylating FNIP1, TSC2, RPTOR, WDR24 and ATG1/ULK1: in response to nutrient limitation, negatively regulates the mTORC1 complex by phosphorylating RPTOR component of the mTORC1 complex and by phosphorylating and activating TSC2. Also phosphorylates and inhibits GATOR2 subunit WDR24 in response to nutrient limitation, leading to suppress glucose-mediated mTORC1 activation. In response to energetic stress, phosphorylates FNIP1, inactivating the non-canonical mTORC1 signaling, thereby promoting nuclear translocation of TFEB and TFE3, and inducing transcription of lysosomal or autophagy genes. In response to nutrient limitation, promotes autophagy by phosphorylating and activating ATG1/ULK1. In that process, it also activates WDR45/WIPI4. Phosphorylates CASP6, thereby preventing its autoprocessing and subsequent activation. AMPK also acts as a regulator of circadian rhythm by mediating phosphorylation of CRY1, leading to destabilize it. May regulate the Wnt signaling pathway by phosphorylating CTNNB1, leading to stabilize it. Also acts as a regulator of cellular polarity by remodeling the actin cytoskeleton; probably by indirectly activating myosin. Also phosphorylates CFTR, EEF2K, KLC1, NOS3 and SLC12A1. Plays an important role in the differential regulation of pro-autophagy (composed of PIK3C3, BECN1, PIK3R4 and UVRAG or ATG14) and non-autophagy (composed of PIK3C3, BECN1 and PIK3R4) complexes, in response to glucose starvation. Can inhibit the non-autophagy complex by phosphorylating PIK3C3 and can activate the pro-autophagy complex by phosphorylating BECN1. Upon glucose starvation, promotes ARF6 activation in a kinase-independent manner leading to cell migration. Upon glucose deprivation mediates the phosphorylation of ACSS2 at 'Ser-659', which exposes the nuclear localization signal of ACSS2, required for its interaction with KPNA1 and nuclear translocation. Upon stress, regulates mitochondrial fragmentation through phosphorylation of MTFR1L. In Homo sapiens (Human), this protein is 5'-AMP-activated protein kinase catalytic subunit alpha-2.